Reading from the N-terminus, the 692-residue chain is Follicle-stimulating hormone receptor (692 aa).

A signal peptide spans 1-17 (MALLLVSLLAFLGSGSG). Disulfide bonds link Cys-18/Cys-25 and Cys-23/Cys-32. Residues 18–46 (CHHWLCHCSNRVFLCQDSKVTEIPPDLPR) form the LRRNT domain. The Extracellular portion of the chain corresponds to 18 to 365 (CHHWLCHCSN…EDIMGYNILR (348 aa)). LRR repeat units lie at residues 49 to 72 (IELRFVLTKLRVIPKGSFSGFGDL), 73 to 97 (EKIEISQNDVLEVIEADVFSNLPNL), 98 to 118 (HEIRIEKANNLLYINPEAFQN), 119 to 143 (LPSLRYLLISNTGIKHLPAFHKIQS), 144 to 169 (LQKVLLDIQDNINIHIIARNSFMGLS), 170 to 192 (FESVILWLNKNGIQEIHNCAFNG), 193 to 216 (TQLDELNLSDNNNLEELPDDVFQG), 217 to 240 (ASGPVVLDISRTKVYSLPNHGLEN), and 241 to 259 (LKKLRARSTYRLKKLPSLD). Asn-191 and Asn-199 each carry an N-linked (GlcNAc...) asparagine glycan. 4 disulfides stabilise this stretch: Cys-275-Cys-345, Cys-276-Cys-292, Cys-276-Cys-355, and Cys-292-Cys-337. The N-linked (GlcNAc...) asparagine glycan is linked to Asn-293. Tyr-334 carries the sulfotyrosine modification. Residues 366–386 (VLIWFISILAITGNTTVLVVL) form a helical membrane-spanning segment. The Cytoplasmic segment spans residues 387-397 (TTSQYKLTVPR). A helical membrane pass occupies residues 398–420 (FLMCNLAFADLCIGIYLLLIASV). Residues 421–442 (DIHTKSQYHNYAIDWQTGAGCD) lie on the Extracellular side of the membrane. Cys-441 and Cys-516 are joined by a disulfide. The helical transmembrane segment at 443–464 (AAGFFTVFASELSVYTLAAITL) threads the bilayer. At 465–484 (ERWHTITHAMQLECKVQLCH) the chain is on the cytoplasmic side. Residues 485–507 (AASIMVLGWAFAFAAALFPIFGI) form a helical membrane-spanning segment. Residues 508–527 (SSYMKVSICLPMDIDSPLSQ) lie on the Extracellular side of the membrane. A helical transmembrane segment spans residues 528 to 549 (LYVMALLVLNALAFVVICGCYT). The Cytoplasmic segment spans residues 550–572 (HIYLTVRNPNIVSSSRDTKIAKR). Residues 573-596 (MATLIFTDFLCMAPILFFAISASL) traverse the membrane as a helical segment. Residues 597-607 (KVPLITVSKAK) are Extracellular-facing. The chain crosses the membrane as a helical span at residues 608–629 (ILLVLFYPINSCANPFLYAIFT). The Cytoplasmic segment spans residues 630-692 (KNFRRDFFVL…LVPLNHSVQN (63 aa)).

Belongs to the G-protein coupled receptor 1 family. FSH/LSH/TSH subfamily. Homotrimer. Functions as a homotrimer binding the FSH hormone heterodimer composed of CGA and FSHB. Interacts with ARRB2. Interacts with APPL2; interaction is independent of follicle stimulating hormone stimulation. In terms of processing, N-glycosylated; indirectly required for FSH-binding, possibly via a conformational change that allows high affinity binding of hormone. Post-translationally, sulfated.

It is found in the cell membrane. Functionally, g protein-coupled receptor for follitropin, the follicle-stimulating hormone. Through cAMP production activates the downstream PI3K-AKT and ERK1/ERK2 signaling pathways. The protein is Follicle-stimulating hormone receptor (Fshr) of Mus musculus (Mouse).